Here is a 588-residue protein sequence, read N- to C-terminus: Aspartate--tRNA ligase (588 aa).

Position 177 (E177) interacts with L-aspartate. Residues Q201 to K204 are aspartate. R223 provides a ligand contact to L-aspartate. ATP is bound by residues R223–E225 and Q232. H451 contributes to the L-aspartate binding site. E485 is a binding site for ATP. R492 provides a ligand contact to L-aspartate. An ATP-binding site is contributed by G537–R540.

It belongs to the class-II aminoacyl-tRNA synthetase family. Type 1 subfamily. Homodimer.

The protein resides in the cytoplasm. It catalyses the reaction tRNA(Asp) + L-aspartate + ATP = L-aspartyl-tRNA(Asp) + AMP + diphosphate. In terms of biological role, catalyzes the attachment of L-aspartate to tRNA(Asp) in a two-step reaction: L-aspartate is first activated by ATP to form Asp-AMP and then transferred to the acceptor end of tRNA(Asp). The polypeptide is Aspartate--tRNA ligase (Staphylococcus aureus (strain MRSA252)).